A 142-amino-acid chain; its full sequence is Coactosin-like protein (142 aa).

The residue at position 2 (alanine 2) is an N-acetylalanine. The ADF-H domain maps to 2 to 130 (ATKIDKEACR…EEDFIKSELK (129 aa)). The flexible and important for F-actin binding stretch occupies residues 66 to 75 (TGDAMSKRSK). Residues lysine 102 and lysine 126 each carry the N6-acetyllysine modification.

It belongs to the actin-binding proteins ADF family. Coactosin subfamily. Interacts with 5-lipoxygenase (ALOX5/5LO) in a calcium-independent manner. Binds to F-actin with a stoichiometry of 1:2. As to expression, widely expressed with highest levels in placenta, lung, kidney and peripheral blood leukocytes and lower levels in brain, liver and pancreas.

The protein resides in the cytoplasm. The protein localises to the cytoskeleton. Its subcellular location is the nucleus. Functionally, binds to F-actin in a calcium-independent manner. Has no direct effect on actin depolymerization. Acts as a chaperone for ALOX5 (5LO), influencing both its stability and activity in leukotrienes synthesis. The polypeptide is Coactosin-like protein (COTL1) (Homo sapiens (Human)).